A 252-amino-acid polypeptide reads, in one-letter code: Octanoyltransferase (252 aa).

The segment covering 1-21 has biased composition (low complexity); the sequence is MPSAPAAPAAPAAPDAAASVA. The interval 1–22 is disordered; sequence MPSAPAAPAAPAAPDAAASVAP. The BPL/LPL catalytic domain maps to 56–237; sequence PDTDDEIWVV…RLIAHLDGAT (182 aa). Substrate is bound by residues 96 to 103, 168 to 170, and 181 to 183; these read RGGQITYH, ALG, and GLS. Catalysis depends on Cys199, which acts as the Acyl-thioester intermediate.

Belongs to the LipB family.

It localises to the cytoplasm. It catalyses the reaction octanoyl-[ACP] + L-lysyl-[protein] = N(6)-octanoyl-L-lysyl-[protein] + holo-[ACP] + H(+). It functions in the pathway protein modification; protein lipoylation via endogenous pathway; protein N(6)-(lipoyl)lysine from octanoyl-[acyl-carrier-protein]: step 1/2. Its function is as follows. Catalyzes the transfer of endogenously produced octanoic acid from octanoyl-acyl-carrier-protein onto the lipoyl domains of lipoate-dependent enzymes. Lipoyl-ACP can also act as a substrate although octanoyl-ACP is likely to be the physiological substrate. The protein is Octanoyltransferase of Burkholderia pseudomallei (strain 668).